Consider the following 573-residue polypeptide: Delta 8-(E)-sphingolipid desaturase (573 aa).

A Cytochrome b5 heme-binding domain is found at 2–77 (SRVLSRRDIA…FKIWKIGRID (76 aa)). Heme is bound by residues H37 and H60. A helical transmembrane segment spans residues 228–248 (LFGISFYLLSLKWFAISAICL). The Histidine box-1 motif lies at 260-264 (HDAGH). The chain crosses the membrane as a helical span at residues 273–293 (VDNIIGMTVASWIGGLSLGWW). The Histidine box-2 signature appears at 297–301 (HNVHH). 3 helical membrane-spanning segments follow: residues 353-372 (YLYY…LSWM), 393-413 (LAGL…KQMP), and 422-442 (VMIS…SHFA). The Histidine box-3 signature appears at 481–485 (QVIHH).

Belongs to the fatty acid desaturase type 1 family.

It is found in the membrane. It carries out the reaction an N-acylsphing-4-enine + 2 Fe(II)-[cytochrome b5] + O2 + 2 H(+) = a (4E,8E)-4-sphinga-4,8-dienine ceramide + 2 Fe(III)-[cytochrome b5] + 2 H2O. The protein operates within lipid metabolism; sphingolipid metabolism. Its function is as follows. Delta(8)-fatty-acid desaturase which introduces a double bond at the 8-position in the long-chain base (LCB) of ceramides. Required for the formation of the di-unsaturated sphingoid base (E,E)-sphinga-4,8-dienine during glucosylceramide (GluCer) biosynthesis. The sequence is that of Delta 8-(E)-sphingolipid desaturase from Kluyveromyces lactis (strain ATCC 8585 / CBS 2359 / DSM 70799 / NBRC 1267 / NRRL Y-1140 / WM37) (Yeast).